The sequence spans 181 residues: uncharacterized protein (181 aa).

Transmembrane regions (helical) follow at residues 3-23, 67-87, 92-112, and 159-179; these read LSQTALFIGSIINLNALVLIL, ALLLIFIIGMLKGIIYFGLSV, VLGVLTVLKSIGLAIFYVLFI, and MFILLFLNNFMLDLLGGLWII.

This sequence belongs to the YggT family.

The protein resides in the cell membrane. This is an uncharacterized protein from Haemophilus influenzae (strain ATCC 51907 / DSM 11121 / KW20 / Rd).